We begin with the raw amino-acid sequence, 215 residues long: Phosphoenolpyruvate guanylyltransferase (215 aa).

Positions 144, 159, and 162 each coordinate phosphoenolpyruvate.

The protein belongs to the CofC family.

The enzyme catalyses phosphoenolpyruvate + GTP + H(+) = enolpyruvoyl-2-diphospho-5'-guanosine + diphosphate. It functions in the pathway cofactor biosynthesis; coenzyme F420 biosynthesis. Its function is as follows. Guanylyltransferase that catalyzes the activation of phosphoenolpyruvate (PEP) as enolpyruvoyl-2-diphospho-5'-guanosine, via the condensation of PEP with GTP. It is involved in the biosynthesis of coenzyme F420, a hydride carrier cofactor. This chain is Phosphoenolpyruvate guanylyltransferase, found in Geodermatophilus obscurus (strain ATCC 25078 / DSM 43160 / JCM 3152 / CCUG 61914 / KCC A-0152 / KCTC 9177 / NBRC 13315 / NRRL B-3577 / G-20).